A 101-amino-acid polypeptide reads, in one-letter code: Small ribosomal subunit protein uS14 (101 aa).

The protein belongs to the universal ribosomal protein uS14 family. Part of the 30S ribosomal subunit. Contacts proteins S3 and S10.

Its function is as follows. Binds 16S rRNA, required for the assembly of 30S particles and may also be responsible for determining the conformation of the 16S rRNA at the A site. The protein is Small ribosomal subunit protein uS14 of Kocuria rhizophila (strain ATCC 9341 / DSM 348 / NBRC 103217 / DC2201).